Consider the following 260-residue polypeptide: Proteasome subunit alpha (260 aa).

The interval 231 to 260 (LLPEDFSPGQTEGGGDPAPESGDSKDAKDN) is disordered.

The protein belongs to the peptidase T1A family. As to quaternary structure, the 20S proteasome core is composed of 14 alpha and 14 beta subunits that assemble into four stacked heptameric rings, resulting in a barrel-shaped structure. The two inner rings, each composed of seven catalytic beta subunits, are sandwiched by two outer rings, each composed of seven alpha subunits. The catalytic chamber with the active sites is on the inside of the barrel. Has a gated structure, the ends of the cylinder being occluded by the N-termini of the alpha-subunits. Is capped by the proteasome-associated ATPase, ARC.

The protein localises to the cytoplasm. It functions in the pathway protein degradation; proteasomal Pup-dependent pathway. The formation of the proteasomal ATPase ARC-20S proteasome complex, likely via the docking of the C-termini of ARC into the intersubunit pockets in the alpha-rings, may trigger opening of the gate for substrate entry. Interconversion between the open-gate and close-gate conformations leads to a dynamic regulation of the 20S proteasome proteolysis activity. In terms of biological role, component of the proteasome core, a large protease complex with broad specificity involved in protein degradation. The protein is Proteasome subunit alpha of Mycobacteroides abscessus (strain ATCC 19977 / DSM 44196 / CCUG 20993 / CIP 104536 / JCM 13569 / NCTC 13031 / TMC 1543 / L948) (Mycobacterium abscessus).